A 381-amino-acid polypeptide reads, in one-letter code: Putative acetyl-CoA C-acetyltransferase VraB (381 aa).

The active-site Acyl-thioester intermediate is Cys86. His338 (proton acceptor) is an active-site residue.

The protein belongs to the thiolase-like superfamily. Thiolase family.

The sequence is that of Putative acetyl-CoA C-acetyltransferase VraB (vraB) from Staphylococcus haemolyticus (strain JCSC1435).